A 608-amino-acid chain; its full sequence is RAS guanyl-releasing protein 2 (608 aa).

The region spanning 4–126 is the N-terminal Ras-GEF domain; the sequence is TLDLDKGCTV…SLIDIENVPT (123 aa). Phosphoserine occurs at positions 116, 117, and 147. Residues 154 to 387 enclose the Ras-GEF domain; the sequence is EPLELAAHLT…YQLSLQREPR (234 aa). Residues 382–407 form a disordered region; the sequence is LQREPRSKSSPTSPTTCTPPPRPPVL. 2 consecutive EF-hand domains span residues 426–461 and 463–490; these read HIEK…FPYL and AFGD…SSSM. Positions 439, 441, 443, 445, 450, 468, 470, 472, 474, and 479 each coordinate Ca(2+). Residues 498–548 form a Phorbol-ester/DAG-type zinc finger; that stretch reads VHNFHESNSLRPVACRHCKALILGIYKQGLKCRACGVNCHKQCKDRLSVEC. Phosphoserine is present on residues Ser-554 and Ser-575. The interval 556 to 591 is disordered; the sequence is SLEGSAPSPSPTHTHHRAFSFSLPRPGRRGSRPPEI.

The protein belongs to the RASGRP family. In terms of assembly, forms a signaling complex with RAP1 and BRAF. Interacts with RAP1. Interacts with F-actin.

It is found in the cytoplasm. Its subcellular location is the cytosol. The protein resides in the cell membrane. It localises to the synapse. The protein localises to the synaptosome. It is found in the cell projection. Its subcellular location is the ruffle membrane. Functionally, functions as a calcium- and DAG-regulated nucleotide exchange factor specifically activating Rap through the exchange of bound GDP for GTP. May also activate other GTPases such as RRAS, RRAS2, NRAS, KRAS but not HRAS. Functions in aggregation of platelets and adhesion of T-lymphocytes and neutrophils probably through inside-out integrin activation. May function in the muscarinic acetylcholine receptor M1/CHRM1 signaling pathway. This chain is RAS guanyl-releasing protein 2 (RASGRP2), found in Bos taurus (Bovine).